Reading from the N-terminus, the 299-residue chain is Bifunctional protein FolD (299 aa).

NADP(+) contacts are provided by residues 164–166 and isoleucine 234; that span reads GRS.

The protein belongs to the tetrahydrofolate dehydrogenase/cyclohydrolase family. Homodimer.

The enzyme catalyses (6R)-5,10-methylene-5,6,7,8-tetrahydrofolate + NADP(+) = (6R)-5,10-methenyltetrahydrofolate + NADPH. The catalysed reaction is (6R)-5,10-methenyltetrahydrofolate + H2O = (6R)-10-formyltetrahydrofolate + H(+). Its pathway is one-carbon metabolism; tetrahydrofolate interconversion. Catalyzes the oxidation of 5,10-methylenetetrahydrofolate to 5,10-methenyltetrahydrofolate and then the hydrolysis of 5,10-methenyltetrahydrofolate to 10-formyltetrahydrofolate. The sequence is that of Bifunctional protein FolD from Christiangramia forsetii (strain DSM 17595 / CGMCC 1.15422 / KT0803) (Gramella forsetii).